Reading from the N-terminus, the 60-residue chain is MGIVDIAREYIVAWRRILTLARKPDEEEYSLLLKLNLLGFALVGGIGYLIHLGYIILTSG.

A helical transmembrane segment spans residues L37–L57.

It belongs to the SecE/SEC61-gamma family. Component of the Sec protein translocase complex. Heterotrimer consisting of SecY (alpha), SecG (beta) and SecE (gamma) subunits. The heterotrimers can form oligomers, although 1 heterotrimer is thought to be able to translocate proteins. Interacts with the ribosome. May interact with SecDF, and other proteins may be involved.

The protein localises to the cell membrane. Functionally, essential subunit of the Sec protein translocation channel SecYEG. Clamps together the 2 halves of SecY. May contact the channel plug during translocation. The sequence is that of Protein translocase subunit SecE from Aeropyrum pernix (strain ATCC 700893 / DSM 11879 / JCM 9820 / NBRC 100138 / K1).